We begin with the raw amino-acid sequence, 341 residues long: Protein DOWNY MILDEW RESISTANCE 6 (341 aa).

One can recognise a Fe2OG dioxygenase domain in the interval 188–288 (QGQHMAVNYY…RLSVASFLCP (101 aa)). Positions 212, 214, and 269 each coordinate Fe cation. R279 is a 2-oxoglutarate binding site.

It belongs to the iron/ascorbate-dependent oxidoreductase family. Requires Fe(2+) as cofactor.

The enzyme catalyses salicylate + NADH + O2 + H(+) = 2,3-dihydroxybenzoate + NAD(+) + H2O. Converts salicylic acid (SA) to 2,3-dihydroxybenzoic acid (2,3-DHBA). Suppressor of immunity. Regulates negatively defense associated genes expression (e.g. PR-1, PR-2, and PR-5). Negative regulator of defense against Hyaloperonospora arabidopsidis. In terms of biological role, (Microbial infection) Required for susceptibility to the downy mildew pathogen Hyaloperonospora arabidopsidis. Functionally, (Microbial infection) Required for susceptibility to Pseudomonas syringae pv. tomato DC3000. Its function is as follows. (Microbial infection) Required for susceptibility to the oomycete Phytophthora capsici. This chain is Protein DOWNY MILDEW RESISTANCE 6, found in Arabidopsis thaliana (Mouse-ear cress).